The chain runs to 175 residues: B9 domain-containing protein 2 (175 aa).

The 117-residue stretch at 2 to 118 (AEVHVIGQII…DCPTWRPLGS (117 aa)) folds into the C2 B9-type domain.

This sequence belongs to the B9D family. As to quaternary structure, part of the tectonic-like complex (also named B9 complex). Interacts with TUBG1. As to expression, highest expression in thymus and skeletal muscle. Also expressed in spleen, kidney, lung, heart, microglia and liver. Detected in brain (at protein level).

The protein localises to the cytoplasm. It localises to the cytoskeleton. It is found in the cilium basal body. Its subcellular location is the cilium axoneme. The protein resides in the nucleus. In terms of biological role, component of the tectonic-like complex, a complex localized at the transition zone of primary cilia and acting as a barrier that prevents diffusion of transmembrane proteins between the cilia and plasma membranes. The protein is B9 domain-containing protein 2 (B9d2) of Mus musculus (Mouse).